The following is a 239-amino-acid chain: Pyridoxal 5'-phosphate synthase subunit PdxS (239 aa).

D21 is a D-ribose 5-phosphate binding site. Catalysis depends on K78, which acts as the Schiff-base intermediate with D-ribose 5-phosphate. D-ribose 5-phosphate is bound at residue G150. Position 162 (R162) interacts with D-glyceraldehyde 3-phosphate. D-ribose 5-phosphate is bound by residues G211 and 232 to 233 (GS).

This sequence belongs to the PdxS/SNZ family. In terms of assembly, in the presence of PdxT, forms a dodecamer of heterodimers.

It catalyses the reaction aldehydo-D-ribose 5-phosphate + D-glyceraldehyde 3-phosphate + L-glutamine = pyridoxal 5'-phosphate + L-glutamate + phosphate + 3 H2O + H(+). It functions in the pathway cofactor biosynthesis; pyridoxal 5'-phosphate biosynthesis. Functionally, catalyzes the formation of pyridoxal 5'-phosphate from ribose 5-phosphate (RBP), glyceraldehyde 3-phosphate (G3P) and ammonia. The ammonia is provided by the PdxT subunit. Can also use ribulose 5-phosphate and dihydroxyacetone phosphate as substrates, resulting from enzyme-catalyzed isomerization of RBP and G3P, respectively. In Francisella tularensis, this protein is Pyridoxal 5'-phosphate synthase subunit PdxS.